An 809-amino-acid chain; its full sequence is PiggyBac transposable element-derived protein 1 (809 aa).

Residues 44-126 (RLRFRHFCYQ…TVLENLETGS (83 aa)) enclose the SCAN box domain. Residues 170-199 (CEPPQRPQGNPQEVSGPVPHGSAHLQEKNP) are disordered. Lysine 218 participates in a covalent cross-link: Glycyl lysine isopeptide (Lys-Gly) (interchain with G-Cter in SUMO2). Residues 271–297 (KQETSEEMEQSGEASGKPNRECAPQIP) are disordered. Serine 360 carries the phosphoserine modification.

The protein is PiggyBac transposable element-derived protein 1 (PGBD1) of Homo sapiens (Human).